The following is a 293-amino-acid chain: N(1)-aminopropylagmatine ureohydrolase (293 aa).

The Mn(2+) site is built by His105, Asp128, His130, Asp132, Asp210, and Asp212.

It belongs to the arginase family. Requires Mn(2+) as cofactor.

It catalyses the reaction N(1)-(3-aminopropyl)agmatine + H2O = urea + spermidine. The protein operates within amine and polyamine biosynthesis; spermidine biosynthesis. Its function is as follows. Involved in the biosynthesis of polyamines which are thought to support the growth of thermophilic microorganisms under high-temperature conditions. It seems that long-chain and branched-chain of polyamines effectively stabilize DNA and RNA, respectively. Catalyzes the decarboxylation of N1-(3-aminopropyl)agmatine to yield spermidine and urea. Does not act on agmatine. The chain is N(1)-aminopropylagmatine ureohydrolase from Thermus thermophilus (strain ATCC BAA-163 / DSM 7039 / HB27).